The sequence spans 185 residues: Shikimate kinase (185 aa).

21 to 26 lines the ATP pocket; the sequence is GVGKTT. Residue Thr-25 coordinates Mg(2+). Substrate-binding residues include Asp-43, Arg-67, and Gly-90. Arg-129 provides a ligand contact to ATP. Arg-147 contacts substrate.

It belongs to the shikimate kinase family. As to quaternary structure, monomer. Requires Mg(2+) as cofactor.

The protein localises to the cytoplasm. It catalyses the reaction shikimate + ATP = 3-phosphoshikimate + ADP + H(+). It functions in the pathway metabolic intermediate biosynthesis; chorismate biosynthesis; chorismate from D-erythrose 4-phosphate and phosphoenolpyruvate: step 5/7. In terms of biological role, catalyzes the specific phosphorylation of the 3-hydroxyl group of shikimic acid using ATP as a cosubstrate. This chain is Shikimate kinase, found in Bacillus pumilus (strain SAFR-032).